The primary structure comprises 103 residues: Large ribosomal subunit protein bL21 (103 aa).

Belongs to the bacterial ribosomal protein bL21 family. As to quaternary structure, part of the 50S ribosomal subunit. Contacts protein L20.

In terms of biological role, this protein binds to 23S rRNA in the presence of protein L20. This is Large ribosomal subunit protein bL21 from Albidiferax ferrireducens (strain ATCC BAA-621 / DSM 15236 / T118) (Rhodoferax ferrireducens).